The primary structure comprises 308 residues: MSTTLLQSDLPGLPLRHRGKVRDVFDIPRDRLPADAPPGDYLLMVATDRLSAFDVVLPDPIPGKGEMLCQVSNFWFHKTEHLMPNHLVDIRVEQVLPEGVDPALYAKRAVVTRKLKPVPVEAIARGYLIGSGWKDYQRTGKISGIELPDGLRQAEKLPEPIFTPSTKAAVGDHDENIDFDAMVKTVGAELAERVRDATLRIYRFAADFAAECGILLADTKFEFGTDADGRLYVMDEMLTPDSSRYWPADQYELGTSPPSYDKQFVRDYLETLDWGKTAPGPSLPADVIDRTRAKYAEALQRLAGISVD.

It belongs to the SAICAR synthetase family.

The enzyme catalyses 5-amino-1-(5-phospho-D-ribosyl)imidazole-4-carboxylate + L-aspartate + ATP = (2S)-2-[5-amino-1-(5-phospho-beta-D-ribosyl)imidazole-4-carboxamido]succinate + ADP + phosphate + 2 H(+). It functions in the pathway purine metabolism; IMP biosynthesis via de novo pathway; 5-amino-1-(5-phospho-D-ribosyl)imidazole-4-carboxamide from 5-amino-1-(5-phospho-D-ribosyl)imidazole-4-carboxylate: step 1/2. The chain is Phosphoribosylaminoimidazole-succinocarboxamide synthase from Xanthomonas oryzae pv. oryzae (strain PXO99A).